The sequence spans 1226 residues: Phosphatidylinositol 3,4,5-trisphosphate 5-phosphatase 2B (1226 aa).

The 97-residue stretch at tryptophan 6–valine 102 folds into the SH2 domain. Residues serine 106 to alanine 144 are disordered. The segment covering alanine 108–aspartate 117 has biased composition (acidic residues). The span at serine 127–alanine 144 shows a compositional bias: low complexity. Residues asparagine 906–tyrosine 909 carry the NPXY motif motif. Phosphotyrosine is present on tyrosine 909. Disordered regions lie at residues arginine 945 to glutamate 964 and serine 985 to lysine 1035. A compositionally biased stretch (low complexity) spans histidine 1011–asparagine 1025. One can recognise an SAM domain in the interval glycine 1163–aspartate 1226.

The protein belongs to the inositol 1,4,5-trisphosphate 5-phosphatase family. Post-translationally, tyrosine phosphorylated by the members of the SRC family after exposure to a diverse array of extracellular stimuli.

The protein resides in the cytoplasm. Its subcellular location is the cytosol. It localises to the cytoskeleton. It is found in the membrane. The protein localises to the cell projection. The protein resides in the filopodium. Its subcellular location is the lamellipodium. It localises to the nucleus. It is found in the nucleus speckle. The catalysed reaction is a 1,2-diacyl-sn-glycero-3-phospho-(1D-myo-inositol-3,4,5-trisphosphate) + H2O = a 1,2-diacyl-sn-glycero-3-phospho-(1D-myo-inositol-3,4-bisphosphate) + phosphate. Its function is as follows. Phosphatidylinositol (PtdIns) phosphatase that specifically hydrolyzes the 5-phosphate of phosphatidylinositol-3,4,5-trisphosphate (PtdIns(3,4,5)P3) to produce PtdIns(3,4)P2, thereby negatively regulating the PI3K (phosphoinositide 3-kinase) pathways. Plays a central role in regulation of PI3K-dependent insulin signaling, although the precise molecular mechanisms and signaling pathways remain unclear. Part of a signaling pathway that regulates actin cytoskeleton remodeling. Required for the maintenance and dynamic remodeling of actin structures as well as in endocytosis, having a major impact on ligand-induced EGFR internalization and degradation. Participates in regulation of cortical and submembraneous actin. Regulates cell adhesion and cell spreading. Acts as a negative regulator of the FC-gamma-RIIA receptor (FCGR2A). Mediates signaling from the FC-gamma-RIIB receptor (FCGR2B), playing a central role in terminating signal transduction from activating immune/hematopoietic cell receptor systems. May also hydrolyze PtdIns(1,3,4,5)P4, and could thus affect the levels of the higher inositol polyphosphates like InsP6. The protein is Phosphatidylinositol 3,4,5-trisphosphate 5-phosphatase 2B (inppl1b) of Danio rerio (Zebrafish).